Here is a 156-residue protein sequence, read N- to C-terminus: Arginine repressor (156 aa).

The protein belongs to the ArgR family.

It is found in the cytoplasm. It participates in amino-acid biosynthesis; L-arginine biosynthesis [regulation]. Its function is as follows. Regulates arginine biosynthesis genes. This chain is Arginine repressor, found in Yersinia enterocolitica serotype O:8 / biotype 1B (strain NCTC 13174 / 8081).